The chain runs to 124 residues: Small ribosomal subunit protein uS12 (124 aa).

Asp-89 is subject to 3-methylthioaspartic acid.

It belongs to the universal ribosomal protein uS12 family. As to quaternary structure, part of the 30S ribosomal subunit. Contacts proteins S8 and S17. May interact with IF1 in the 30S initiation complex.

Its function is as follows. With S4 and S5 plays an important role in translational accuracy. In terms of biological role, interacts with and stabilizes bases of the 16S rRNA that are involved in tRNA selection in the A site and with the mRNA backbone. Located at the interface of the 30S and 50S subunits, it traverses the body of the 30S subunit contacting proteins on the other side and probably holding the rRNA structure together. The combined cluster of proteins S8, S12 and S17 appears to hold together the shoulder and platform of the 30S subunit. This Yersinia enterocolitica serotype O:8 / biotype 1B (strain NCTC 13174 / 8081) protein is Small ribosomal subunit protein uS12.